The primary structure comprises 1692 residues: Adenylate cyclase (1692 aa).

2 disordered regions span residues 1-22 and 103-142; these read MDQS…FKTG and SLSD…YKEN. Residues 120–132 show a composition bias toward basic and acidic residues; it reads ESSEKSEVPRDTR. The required for interaction with gpa2 stretch occupies residues 174-195; sequence FTNLTFPEPISDDSDSVEFQRD. Residues 292 to 380 form the Ras-associating domain; the sequence is KEFFLRVYRD…SDEEINEEDN (89 aa). LRR repeat units follow at residues 430–450, 454–474, 477–498, 503–524, 526–547, 549–570, 572–594, 596–617, 618–639, 660–681, 684–705, 707–729, 730–751, 753–774, 783–805, 807–827, 831–852, 855–876, 878–899, 901–922, and 930–951; these read ELIS…DFME, KLKR…PITA, QLEV…IFSG, SLKE…TRYL, NLTY…ITEL, QLET…IGSL, KLKH…IGLL, NLET…SECP, KLNS…NPSA, NLVY…VIET, NVET…ISAM, NLKY…GKLK, HLVH…VWQV, SLKV…VATS, QLKI…EFVM, TVEE…TALE, CLKV…FFQN, DLKH…STAQ, LLET…EALS, SLRF…KAEK, and QLEY…EDTN. Residues 995–1275 form the PPM-type phosphatase domain; sequence RYGVCGYLSR…KNVLVVIVEL (281 aa). The region spanning 1332-1469 is the Guanylate cyclase domain; the sequence is AMVFTDIKNS…PVVNRTSRVV (138 aa). Mg(2+)-binding residues include D1337 and D1380. The Mn(2+) site is built by D1337 and D1380. A compositionally biased stretch (basic and acidic residues) spans 1585–1597; it reads SDSKSVHGEEGGS. The disordered stretch occupies residues 1585-1614; that stretch reads SDSKSVHGEEGGSGKRSVSSLRNVSPSEST. Polar residues predominate over residues 1600-1614; the sequence is RSVSSLRNVSPSEST.

The protein belongs to the adenylyl cyclase class-3 family. In terms of assembly, interacts (via N-terminus) with gpa2; the interaction is direct and serves to activate adenylate cyclase and cAMP-PKA signaling, to repress sexual development and gluconeogenesis. Interacts with git1. Mn(2+) is required as a cofactor.

The protein resides in the cytoplasm. The catalysed reaction is ATP = 3',5'-cyclic AMP + diphosphate. With respect to regulation, activated by binding G protein gpa2. Activated by git1. In contrast to yeast cyclase, S.pombe cyclase is not likely to be regulated by RAS proteins. Functionally, acts in glucose-induced cAMP signaling by catalyzing the synthesis of the second messenger, cAMP to activate PKA signaling and repress sexual development and gluconeogenesis. The polypeptide is Adenylate cyclase (Schizosaccharomyces pombe (strain 972 / ATCC 24843) (Fission yeast)).